A 409-amino-acid polypeptide reads, in one-letter code: Isovaleryl-CoA dehydrogenase, mitochondrial (409 aa).

Residues 1 to 22 constitute a mitochondrion transit peptide; sequence MQRFFSARSILGYAVKTRRRSF. Residues 151–160 and 184–186 contribute to the FAD site; these read LAMSEPNAGS and WCT. Residue serine 160 coordinates substrate. Residues 206–207, tyrosine 261, and 268–271 contribute to the substrate site; these read SK and DLER. Glutamate 270 acts as the Proton acceptor in catalysis. FAD contacts are provided by residues arginine 296, glutamine 307, and 364 to 368; that span reads QCLGG. 391–392 is a substrate binding site; sequence AG. 393-395 provides a ligand contact to FAD; that stretch reads TSE.

This sequence belongs to the acyl-CoA dehydrogenase family. Homodimer. FAD serves as cofactor. Expressed in leaves, stems and flowers. Not detected in roots.

Its subcellular location is the mitochondrion. The catalysed reaction is 3-methylbutanoyl-CoA + oxidized [electron-transfer flavoprotein] + H(+) = 3-methylbut-2-enoyl-CoA + reduced [electron-transfer flavoprotein]. The protein operates within amino-acid degradation; L-leucine degradation; (S)-3-hydroxy-3-methylglutaryl-CoA from 3-isovaleryl-CoA: step 1/3. Functionally, involved in degradation of the branched-chain amino acids, phytol and lysine for the supply of carbon and electrons to the ETF/ETFQO complex during dark-induced sugar starvation. This chain is Isovaleryl-CoA dehydrogenase, mitochondrial (IVD), found in Arabidopsis thaliana (Mouse-ear cress).